A 199-amino-acid chain; its full sequence is Small ribosomal subunit protein uS4c (199 aa).

Residues 1–24 (MESDQSKVESDQSKMESDQSKVES) show a composition bias toward basic and acidic residues. Residues 1 to 35 (MESDQSKVESDQSKMESDQSKVESDQSISQSTSKK) are disordered. An S4 RNA-binding domain is found at 84–146 (MRLDNIIFRL…QKSQELIKRN (63 aa)).

It belongs to the universal ribosomal protein uS4 family. In terms of assembly, part of the 30S ribosomal subunit. Contacts protein S5. The interaction surface between S4 and S5 is involved in control of translational fidelity.

The protein resides in the plastid. The protein localises to the chloroplast. One of the primary rRNA binding proteins, it binds directly to 16S rRNA where it nucleates assembly of the body of the 30S subunit. Functionally, with S5 and S12 plays an important role in translational accuracy. The polypeptide is Small ribosomal subunit protein uS4c (rps4) (Psilotum nudum (Whisk fern)).